The chain runs to 730 residues: Pentatricopeptide repeat-containing protein At5g64320, mitochondrial (730 aa).

A mitochondrion-targeting transit peptide spans 1-18; sequence MVMLARSKLALDVSRRSQ. PPR repeat units follow at residues 110–144, 145–175, 181–215, 216–250, 251–285, 286–320, 321–351, 352–387, 388–422, 423–457, 458–492, 493–527, 528–562, 563–597, 598–632, 633–667, and 668–702; these read SFDVYQVLIGKLGANGEFKTIDRLLIQMKDEGIVF, KESLFISIMRDYDKAGFPGQTTRLMLEMRNV, TFKSYNVVLEILVSGNCHKVAANVFYDMLSRKIPP, TLFTFGVVMKAFCAVNEIDSALSLLRDMTKHGCVP, NSVIYQTLIHSLSKCNRVNEALQLLEEMFLMGCVP, DAETFNDVILGLCKFDRINEAAKMVNRMLIRGFAP, DDITYGYLMNGLCKIGRVDAAKDLFYRIPKP, EIVIFNTLIHGFVTHGRLDDAKAVLSDMVTSYGIVP, DVCTYNSLIYGYWKEGLVGLALEVLHDMRNKGCKP, NVYSYTILVDGFCKLGKIDEAYNVLNEMSADGLKP, NTVGFNCLISAFCKEHRIPEAVEIFREMPRKGCKP, DVYTFNSLISGLCEVDEIKHALWLLRDMISEGVVA, NTVTYNTLINAFLRRGEIKEARKLVNEMVFQGSPL, DEITYNSLIKGLCRAGEVDKARSLFEKMLRDGHAP, SNISCNILINGLCRSGMVEEAVEFQKEMVLRGSTP, DIVTFNSLINGLCRAGRIEDGLTMFRKLQAEGIPP, and DTVTFNTLMSWLCKGGFVYDACLLLDEGIEDGFVP.

The protein belongs to the PPR family. P subfamily.

The protein localises to the mitochondrion. The sequence is that of Pentatricopeptide repeat-containing protein At5g64320, mitochondrial from Arabidopsis thaliana (Mouse-ear cress).